The chain runs to 198 residues: Probable chorismate pyruvate-lyase (198 aa).

Positions 76, 114, and 172 each coordinate substrate.

Belongs to the UbiC family.

The protein localises to the cytoplasm. It catalyses the reaction chorismate = 4-hydroxybenzoate + pyruvate. It participates in cofactor biosynthesis; ubiquinone biosynthesis. In terms of biological role, removes the pyruvyl group from chorismate, with concomitant aromatization of the ring, to provide 4-hydroxybenzoate (4HB) for the ubiquinone pathway. This chain is Probable chorismate pyruvate-lyase, found in Bordetella avium (strain 197N).